The chain runs to 382 residues: Norsolorinic acid reductase B (382 aa).

Asp64 lines the NADP(+) pocket. The active-site Proton donor is the Tyr69. His143 contributes to the substrate binding site. Residues 173–174 (SD), Gln199, 228–238 (GVLNQGRFRTE), and 302–310 (RKVDHLTGV) contribute to the NADP(+) site.

This sequence belongs to the aldo/keto reductase family. Aldo/keto reductase 2 subfamily.

It functions in the pathway mycotoxin biosynthesis; aflatoxin biosynthesis. Norsolorinic acid reductase; part of the gene cluster that mediates the biosynthesis of aflatoxins, a group of polyketide-derived furanocoumarins, and part of the most toxic and carcinogenic compounds among the known mycotoxins. The four major aflatoxins produced by A.parasiticus are aflatoxin B1 (AFB1), aflatoxin B2 (AFB2), aflatoxin G1 (AFG1) and aflatoxin G2 (AFG2). Within the aflatoxin pathway, the norsolorinic acid reductase aflE may play a role in the conversion of norsolorinic acid (NOR) to averantin (AVN). The biosynthesis of aflatoxins begins with the norsolorinic acid synthase aflC that combines a hexanoyl starter unit produced by the fatty acid synthase aflA/aflB and 7 malonyl-CoA extender units to synthesize the precursor NOR. The second step is the conversion of NOR to averantin and requires the norsolorinic acid ketoreductase aflD, which catalyzes the dehydration of norsolorinic acid to form (1'S)-averantin. The norsolorinic acid reductases aflE and aflF may also play a role in the conversion of NOR to AVN. The cytochrome P450 monooxygenase aflG then catalyzes the hydroxylation of AVN to 5'hydroxyaverantin (HAVN). The next step is performed by the 5'-hydroxyaverantin dehydrogenase aflH that transforms HAVN to 5'-oxoaverantin (OAVN) which is further converted to averufin (AVF) by aflK that plays a dual role in the pathway, as a 5'-oxoaverantin cyclase that mediates conversion of 5'-oxoaverantin, as well as a versicolorin B synthase in a later step in the pathway. The averufin oxidase aflI catalyzes the conversion of AVF to versiconal hemiacetal acetate (VHA). VHA is then the substrate for the versiconal hemiacetal acetate esterase aflJ to yield versiconal (VAL). Versicolorin B synthase aflK then converts VAL to versicolorin B (VERB) by closing the bisfuran ring of aflatoxin which is required for DNA-binding, thus giving to aflatoxin its activity as a mutagen. Then, the activity of the versicolorin B desaturase aflL leads to versicolorin A (VERA). A branch point starts from VERB since it can also be converted to dihydrodemethylsterigmatocystin (DMDHST), probably also by aflL, VERA being a precursor for aflatoxins B1 and G1, and DMDHST for aflatoxins B2 and G2. Next, the versicolorin reductase aflM and the cytochrome P450 monooxygenase aflN are involved in conversion of VERA to demethylsterigmatocystin (DMST). AflX and aflY seem also involved in this step, through probable aflX-mediated epoxide ring-opening step following versicolorin A oxidation and aflY-mediated Baeyer-Villiger oxidation required for the formation of the xanthone ring. The methyltransferase aflO then leads to the modification of DMST to sterigmatocystin (ST), and of DMDHST to dihydrosterigmatocystin (DHST). Both ST and DHST are then substrates of the O-methyltransferase aflP to yield O-methylsterigmatocystin (OMST) and dihydro-O-methylsterigmatocystin (DHOMST), respectively. Finally OMST is converted to aflatoxins B1 and G1, and DHOMST to aflatoxins B2 and G2, via the action of several enzymes including O-methylsterigmatocystin oxidoreductase aflQ, the cytochrome P450 monooxygenase aflU, but also the NADH-dependent flavin oxidoreductase nadA which is specifically required for the synthesis of AFG1. This chain is Norsolorinic acid reductase B, found in Aspergillus parasiticus (strain ATCC 56775 / NRRL 5862 / SRRC 143 / SU-1).